The primary structure comprises 599 residues: Elongation factor 4 (599 aa).

Positions 2-184 constitute a tr-type G domain; sequence KNIRNFSIIA…RLVRDIPPPE (183 aa). GTP-binding positions include 14-19 and 131-134; these read DHGKST and NKID.

This sequence belongs to the TRAFAC class translation factor GTPase superfamily. Classic translation factor GTPase family. LepA subfamily.

Its subcellular location is the cell inner membrane. The enzyme catalyses GTP + H2O = GDP + phosphate + H(+). Its function is as follows. Required for accurate and efficient protein synthesis under certain stress conditions. May act as a fidelity factor of the translation reaction, by catalyzing a one-codon backward translocation of tRNAs on improperly translocated ribosomes. Back-translocation proceeds from a post-translocation (POST) complex to a pre-translocation (PRE) complex, thus giving elongation factor G a second chance to translocate the tRNAs correctly. Binds to ribosomes in a GTP-dependent manner. The sequence is that of Elongation factor 4 from Escherichia fergusonii (strain ATCC 35469 / DSM 13698 / CCUG 18766 / IAM 14443 / JCM 21226 / LMG 7866 / NBRC 102419 / NCTC 12128 / CDC 0568-73).